The chain runs to 1207 residues: DNA-directed RNA polymerase subunit beta' (1207 aa).

Positions 60, 62, 75, and 78 each coordinate Zn(2+). Mg(2+) contacts are provided by Asp-450, Asp-452, and Asp-454. 4 residues coordinate Zn(2+): Cys-819, Cys-893, Cys-900, and Cys-903.

It belongs to the RNA polymerase beta' chain family. The RNAP catalytic core consists of 2 alpha, 1 beta, 1 beta' and 1 omega subunit. When a sigma factor is associated with the core the holoenzyme is formed, which can initiate transcription. The cofactor is Mg(2+). It depends on Zn(2+) as a cofactor.

The enzyme catalyses RNA(n) + a ribonucleoside 5'-triphosphate = RNA(n+1) + diphosphate. In terms of biological role, DNA-dependent RNA polymerase catalyzes the transcription of DNA into RNA using the four ribonucleoside triphosphates as substrates. This Streptococcus pyogenes serotype M3 (strain SSI-1) protein is DNA-directed RNA polymerase subunit beta'.